Consider the following 145-residue polypeptide: Small ribosomal subunit protein uS12A (145 aa).

Pro-64 carries the hydroxyproline modification.

It belongs to the universal ribosomal protein uS12 family.

The polypeptide is Small ribosomal subunit protein uS12A (RPS23A) (Naumovozyma castellii (Yeast)).